We begin with the raw amino-acid sequence, 125 residues long: Cu-Zn superoxide dismutase-like protein OPG175 (125 aa).

Cys52 and Cys102 are disulfide-bonded.

Belongs to the Cu-Zn superoxide dismutase family.

It localises to the virion. It is found in the host cytoplasm. In terms of biological role, superoxide dismutase-like protein with no enzymatic activity. The protein is Cu-Zn superoxide dismutase-like protein OPG175 (OPG175) of Homo sapiens (Human).